The sequence spans 449 residues: Tubulin alpha chain (449 aa).

The short motif at 1–4 (MREC) is the MREC motif element. A GTP-binding site is contributed by Q11. Residue K40 is modified to N6-acetyllysine. GTP is bound by residues E71, S140, G144, T145, T179, N206, and N228. E71 lines the Mg(2+) pocket. E254 is an active-site residue. The interval 430-449 (KDYEEVGADSADAEDEGEEY) is disordered. The segment covering 431–449 (DYEEVGADSADAEDEGEEY) has biased composition (acidic residues).

It belongs to the tubulin family. In terms of assembly, dimer of alpha and beta chains. A typical microtubule is a hollow water-filled tube with an outer diameter of 25 nm and an inner diameter of 15 nM. Alpha-beta heterodimers associate head-to-tail to form protofilaments running lengthwise along the microtubule wall with the beta-tubulin subunit facing the microtubule plus end conferring a structural polarity. Microtubules usually have 13 protofilaments but different protofilament numbers can be found in some organisms and specialized cells. Requires Mg(2+) as cofactor. In terms of processing, some glutamate residues at the C-terminus are polyglycylated, resulting in polyglycine chains on the gamma-carboxyl group. Glycylation is mainly limited to tubulin incorporated into axonemes (cilia and flagella) whereas glutamylation is prevalent in neuronal cells, centrioles, axonemes, and the mitotic spindle. Both modifications can coexist on the same protein on adjacent residues, and lowering polyglycylation levels increases polyglutamylation, and reciprocally. The precise function of polyglycylation is still unclear. Post-translationally, some glutamate residues at the C-terminus are polyglutamylated, resulting in polyglutamate chains on the gamma-carboxyl group. Polyglutamylation plays a key role in microtubule severing by spastin (SPAST). SPAST preferentially recognizes and acts on microtubules decorated with short polyglutamate tails: severing activity by SPAST increases as the number of glutamates per tubulin rises from one to eight, but decreases beyond this glutamylation threshold. Acetylation of alpha chains at Lys-40 is located inside the microtubule lumen. This modification has been correlated with increased microtubule stability, intracellular transport and ciliary assembly. In terms of processing, undergoes a tyrosination/detyrosination cycle, the cyclic removal and re-addition of a C-terminal tyrosine residue by the enzymes tubulin tyrosine carboxypeptidase (MATCAP1, VASH1 or VASH2) and tubulin tyrosine ligase (TTL), respectively. Post-translationally, tyrosination promotes microtubule interaction with CAP-Gly microtubule plus-end tracking proteins. Tyrosinated tubulins regulate the initiation of dynein-driven motility. Detyrosination is involved in metaphase plate congression by guiding chromosomes during mitosis. Detyrosination increases microtubules-dependent mechanotransduction in dystrophic cardiac and skeletal muscle. In cardiomyocytes, detyrosinated microtubules are required to resist to contractile compression during contraction.

The protein localises to the cytoplasm. It is found in the cytoskeleton. The catalysed reaction is GTP + H2O = GDP + phosphate + H(+). In terms of biological role, tubulin is the major constituent of microtubules, a cylinder consisting of laterally associated linear protofilaments composed of alpha- and beta-tubulin heterodimers. Microtubules grow by the addition of GTP-tubulin dimers to the microtubule end, where a stabilizing cap forms. Below the cap, tubulin dimers are in GDP-bound state, owing to GTPase activity of alpha-tubulin. In Xenopus laevis (African clawed frog), this protein is Tubulin alpha chain (tuba).